We begin with the raw amino-acid sequence, 75 residues long: Large ribosomal subunit protein bL31 (75 aa).

This sequence belongs to the bacterial ribosomal protein bL31 family. Type A subfamily. In terms of assembly, part of the 50S ribosomal subunit.

Functionally, binds the 23S rRNA. This chain is Large ribosomal subunit protein bL31, found in Chlorobium luteolum (strain DSM 273 / BCRC 81028 / 2530) (Pelodictyon luteolum).